Consider the following 343-residue polypeptide: KRR1 small subunit processome component homolog (343 aa).

The KH domain maps to 126-194; sequence DIIKIGNLVH…VRDIVLETMN (69 aa). The span at 230–246 shows a compositional bias: basic residues; that stretch reads KNKNISKRKQPKNKKPK. The segment at 230–343 is disordered; sequence KNKNISKRKQ…LMKANKKNRS (114 aa). Composition is skewed to basic and acidic residues over residues 272–303 and 318–331; these read LNKE…RNKD and RPAE…DALK. A coiled-coil region spans residues 272-341; sequence LNKEQKQAKK…AKLMKANKKN (70 aa). The span at 333 to 343 shows a compositional bias: basic residues; the sequence is KLMKANKKNRS.

The protein belongs to the KRR1 family. As to quaternary structure, monomer. Component of the ribosomal small subunit (SSU) processome.

It localises to the nucleus. The protein resides in the nucleolus. Its function is as follows. Required for 40S ribosome biogenesis. Involved in nucleolar processing of pre-18S ribosomal RNA and ribosome assembly. Binds to RNA. Required for female germline development, cell viability during eye development and for survival of dividing cells and epithelial cells during early wing disk development. The chain is KRR1 small subunit processome component homolog from Drosophila virilis (Fruit fly).